The following is a 128-amino-acid chain: Large ribosomal subunit protein bL17 (128 aa).

Belongs to the bacterial ribosomal protein bL17 family. Part of the 50S ribosomal subunit. Contacts protein L32.

In Streptococcus agalactiae serotype Ia (strain ATCC 27591 / A909 / CDC SS700), this protein is Large ribosomal subunit protein bL17.